Consider the following 196-residue polypeptide: Peptidyl-tRNA hydrolase (196 aa).

Y17 is a tRNA binding site. H22 functions as the Proton acceptor in the catalytic mechanism. Residues F68, N70, and N116 each contribute to the tRNA site.

This sequence belongs to the PTH family. Monomer.

The protein resides in the cytoplasm. The enzyme catalyses an N-acyl-L-alpha-aminoacyl-tRNA + H2O = an N-acyl-L-amino acid + a tRNA + H(+). In terms of biological role, hydrolyzes ribosome-free peptidyl-tRNAs (with 1 or more amino acids incorporated), which drop off the ribosome during protein synthesis, or as a result of ribosome stalling. Functionally, catalyzes the release of premature peptidyl moieties from peptidyl-tRNA molecules trapped in stalled 50S ribosomal subunits, and thus maintains levels of free tRNAs and 50S ribosomes. The chain is Peptidyl-tRNA hydrolase from Serratia proteamaculans (strain 568).